Here is a 477-residue protein sequence, read N- to C-terminus: Cytochrome c oxidase subunit 1 (477 aa).

The chain crosses the membrane as a helical span at residues 16 to 36 (VGTMYLMLGMWSGFGGLNLSW). 2 residues coordinate Ca(2+): Glu-41 and Gly-46. His-62 contacts Fe(II)-heme a. 6 helical membrane-spanning segments follow: residues 64–84 (IMMI…NWLL), 101–121 (FSFW…FIDY), 149–171 (ILGL…VTFL), 185–205 (LFVW…PVLA), 236–256 (LFWF…FGLV), and 269–289 (VFGS…GFIV). His-242 contributes to the Cu cation binding site. Positions 242-246 (HPEVY) form a cross-link, 1'-histidyl-3'-tyrosine (His-Tyr). Tyr-246 contributes to the O2 binding site. Cu cation-binding residues include His-292 and His-293. Transmembrane regions (helical) follow at residues 309–329 (AVTM…IATI) and 340–360 (TLWV…GVIL). His-370 and Asp-371 together coordinate Mg(2+). His-378 provides a ligand contact to heme a3. His-380 is a Fe(II)-heme a binding site. 2 helical membrane passes run 382-402 (VLSM…FPFF) and 416-436 (FFLT…LGLG). Position 443 (Pro-443) interacts with Ca(2+). The chain crosses the membrane as a helical span at residues 455–475 (WSTIGCAMVMVSVSLFIHMQW).

Belongs to the heme-copper respiratory oxidase family. Component of the cytochrome c oxidase (complex IV, CIV), a multisubunit enzyme composed of a catalytic core of 3 subunits and several supernumerary subunits. The complex exists as a monomer or a dimer and forms supercomplexes (SCs) in the inner mitochondrial membrane with ubiquinol-cytochrome c oxidoreductase (cytochrome b-c1 complex, complex III, CIII). It depends on heme as a cofactor. Cu cation serves as cofactor.

The protein localises to the mitochondrion inner membrane. It carries out the reaction 4 Fe(II)-[cytochrome c] + O2 + 8 H(+)(in) = 4 Fe(III)-[cytochrome c] + 2 H2O + 4 H(+)(out). Its pathway is energy metabolism; oxidative phosphorylation. Its function is as follows. Component of the cytochrome c oxidase, the last enzyme in the mitochondrial electron transport chain which drives oxidative phosphorylation. The respiratory chain contains 3 multisubunit complexes succinate dehydrogenase (complex II, CII), ubiquinol-cytochrome c oxidoreductase (cytochrome b-c1 complex, complex III, CIII) and cytochrome c oxidase (complex IV, CIV), that cooperate to transfer electrons derived from NADH and succinate to molecular oxygen, creating an electrochemical gradient over the inner membrane that drives transmembrane transport and the ATP synthase. Cytochrome c oxidase is the component of the respiratory chain that catalyzes the reduction of oxygen to water. Electrons originating from reduced cytochrome c in the intermembrane space (IMS) are transferred via the dinuclear copper A center (CU(A)) of subunit 2 and heme A of subunit 1 to the active site in subunit 1, a binuclear center (BNC) formed by heme A3 and copper B (CU(B)). The BNC reduces molecular oxygen to 2 water molecules using 4 electrons from cytochrome c in the IMS and 4 protons from the mitochondrial matrix. This is Cytochrome c oxidase subunit 1 (COI) from Pecten maximus (King scallop).